The chain runs to 350 residues: S-adenosylmethionine:tRNA ribosyltransferase-isomerase (350 aa).

This sequence belongs to the QueA family. As to quaternary structure, monomer.

The protein localises to the cytoplasm. The enzyme catalyses 7-aminomethyl-7-carbaguanosine(34) in tRNA + S-adenosyl-L-methionine = epoxyqueuosine(34) in tRNA + adenine + L-methionine + 2 H(+). It participates in tRNA modification; tRNA-queuosine biosynthesis. Its function is as follows. Transfers and isomerizes the ribose moiety from AdoMet to the 7-aminomethyl group of 7-deazaguanine (preQ1-tRNA) to give epoxyqueuosine (oQ-tRNA). In Bacillus cytotoxicus (strain DSM 22905 / CIP 110041 / 391-98 / NVH 391-98), this protein is S-adenosylmethionine:tRNA ribosyltransferase-isomerase.